A 201-amino-acid polypeptide reads, in one-letter code: Potassium-transporting ATPase KdpC subunit (201 aa).

Residues 7 to 27 (PAFVVLIALTALTGLAYPLAM) traverse the membrane as a helical segment.

It belongs to the KdpC family. In terms of assembly, the system is composed of three essential subunits: KdpA, KdpB and KdpC.

The protein localises to the cell inner membrane. Functionally, part of the high-affinity ATP-driven potassium transport (or Kdp) system, which catalyzes the hydrolysis of ATP coupled with the electrogenic transport of potassium into the cytoplasm. This subunit acts as a catalytic chaperone that increases the ATP-binding affinity of the ATP-hydrolyzing subunit KdpB by the formation of a transient KdpB/KdpC/ATP ternary complex. The polypeptide is Potassium-transporting ATPase KdpC subunit (Xanthobacter autotrophicus (strain ATCC BAA-1158 / Py2)).